The primary structure comprises 500 residues: MEAARPPPTAGKFVVVGGGIAGVTCAEQLATHFPSEDILLVTASPVIKAVTNFKQISKILEEFDVEEQSSTMLGKRFPNIKVIESGVKQLKSEEHCIVTEDGNQHVYKKLCLCAGAKPKLICEGNPYVLGIRDTDSAQEFQKQLTKAKRIMIIGNGGIALELVYEIEGCEVIWAIKDKAIGNTFFDAGAAEFLTSKLIAEKSEAKIAHKRTRYTTEGRKKEARSKSKADNVGSALGPDWHEGLNLKGTKEFSHKIHLETMCEVKKIYLQDEFRILKKKSFTFPRDHKSVTADTEMWPVYVELTNEKIYGCDFIVSATGVTPNVEPFLHGNSFDLGEDGGLKVDDHMHTSLPDIYAAGDICTTSWQLSPVWQQMRLWTQARQMGWYAAKCMAAASSGDSIDMDFSFELFAHVTKFFNYKVVLLGKYNAQGLGSDHELMLRCTKGREYIKVVMQNGRMMGAVLIGETDLEETFENLILNQMNLSSYGEDLLDPNIDIEDYFD.

N-acetylmethionine is present on methionine 1. The segment at 211–235 (TRYTTEGRKKEARSKSKADNVGSAL) is disordered. Positions 213–228 (YTTEGRKKEARSKSKA) are enriched in basic and acidic residues.

This sequence belongs to the class-I pyridine nucleotide-disulfide oxidoreductase family. PYROXD1 subfamily. Requires FAD as cofactor.

Its subcellular location is the nucleus. It localises to the cytoplasm. It is found in the myofibril. The protein localises to the sarcomere. Its function is as follows. Probable FAD-dependent oxidoreductase; involved in the cellular oxidative stress response. Required for normal sarcomere structure and muscle fiber integrity. In Homo sapiens (Human), this protein is Pyridine nucleotide-disulfide oxidoreductase domain-containing protein 1 (PYROXD1).